A 393-amino-acid chain; its full sequence is MASSSKVFKKTSSNGKLSIYLGKRDFMDHVDTVEPIDGVVLVDPEYLKGRKMFVILTCAFRYGRDDLDVIGLTFRKDLYVLTQQVVPAESNSPQGPLTVLQERLLHKLGENAYPFTLQMVANLPCSVTLQPGPEDSGKACGVDFEVKSFCAENLEEKVSKRDSVRLVVRKVQFAPMEPGPGPWAQTIRRFLLSVQPLQLQAWMDKEVHYHGEPISVNVSINNSTSKVIKKIKISVDQITDVVLYSLDKYTKTVFIQEFTETIAANSSFTQSFSVTPLLSANCRRQGLALDGKLKHEDTNLASSTIVRPGMNKELLGILVSYKVRVNLMVSCGGILGDLTASDVGVELPLTLIHPKPSQETTSSEDIVIEEFARQEDGGEEKQKALAEEGDEGS.

Residues 371 to 386 (FARQEDGGEEKQKALA) show a composition bias toward basic and acidic residues. The tract at residues 371–393 (FARQEDGGEEKQKALAEEGDEGS) is disordered.

The protein belongs to the arrestin family. In terms of assembly, homodimer; disulfide-linked in response to retinal illumination. Interacts with CXCR4; the interaction is dependent on the C-terminal phosphorylation of CXCR4 and modulates the calcium ion mobilization activity of CXCR4.

It is found in the photoreceptor inner segment. It localises to the cell projection. The protein localises to the cilium. Its subcellular location is the photoreceptor outer segment. In terms of biological role, may play a role in an as yet undefined retina-specific signal transduction. Could bind to photoactivated-phosphorylated red/green opsins. The chain is Arrestin-C (ARR3) from Ictidomys tridecemlineatus (Thirteen-lined ground squirrel).